Consider the following 1083-residue polypeptide: Probable arabinosyltransferase B (1083 aa).

The next 13 membrane-spanning stretches (helical) occupy residues 23–45 (VARW…TPLL), 222–239 (FAMM…VALW), 252–274 (LIPA…FLLW), 331–350 (SMWI…LLLS), 357–379 (LGPA…LAAW), 421–443 (TAAF…LAGG), 456–478 (AVGA…TVVF), 525–542 (FGFL…LITL), 555–572 (AWRL…LTFA), 576–598 (WVHH…TVLV), 611–633 (AFLA…WWYV), 648–670 (DGIT…AYYL), and 690–712 (FWAP…MVAG).

This sequence belongs to the emb family.

The protein localises to the cell membrane. Its function is as follows. Arabinosyl transferase responsible for the polymerization of arabinose into the arabinan of arabinogalactan. The polypeptide is Probable arabinosyltransferase B (embB) (Mycobacterium leprae (strain TN)).